A 151-amino-acid chain; its full sequence is Putative truncated GMC-type inactive oxidoreductase L893 (151 aa).

It belongs to the GMC oxidoreductase family.

It is found in the virion. The protein is Putative truncated GMC-type inactive oxidoreductase L893 of Acanthamoeba polyphaga (Amoeba).